The primary structure comprises 319 residues: Probable deoxyhypusine synthase (319 aa).

Residue lysine 287 is the Nucleophile of the active site.

The protein belongs to the deoxyhypusine synthase family. It depends on NAD(+) as a cofactor.

The enzyme catalyses [eIF5A protein]-L-lysine + spermidine = [eIF5A protein]-deoxyhypusine + propane-1,3-diamine. It participates in protein modification; eIF5A hypusination. In terms of biological role, catalyzes the NAD-dependent oxidative cleavage of spermidine and the subsequent transfer of the butylamine moiety of spermidine to the epsilon-amino group of a specific lysine residue of the eIF-5A precursor protein to form the intermediate deoxyhypusine residue. The polypeptide is Probable deoxyhypusine synthase (Ignicoccus hospitalis (strain KIN4/I / DSM 18386 / JCM 14125)).